The following is a 334-amino-acid chain: Transcription initiation factor IIB (334 aa).

A TFIIB-type zinc finger spans residues 34-65 (TESVCPECKSRQLVHDYERAELVCQNCGLVID). Residues Cys38, Cys41, Cys57, and Cys60 each coordinate Zn(2+). 2 tandem repeats follow at residues 151–234 (SELD…SREL) and 245–326 (DYVP…ELAE).

It belongs to the TFIIB family.

Functionally, stabilizes TBP binding to an archaeal box-A promoter. Also responsible for recruiting RNA polymerase II to the pre-initiation complex (DNA-TBP-TFIIB). The protein is Transcription initiation factor IIB of Methanosphaerula palustris (strain ATCC BAA-1556 / DSM 19958 / E1-9c).